We begin with the raw amino-acid sequence, 470 residues long: E3 ubiquitin-protein ligase TRAIP (470 aa).

An RING-type; atypical zinc finger spans residues C7 to R50. Positions A76–T277 form a coiled coil. Residues L211–Q470 are interaction with CYLD. The PIP-box signature appears at Q461–Q470.

The protein belongs to the TRAIP family. Interacts (via PIP-box) with PCNA. Binds TRAF1, TRAF2, TRAF3, TRAF5 and TRAF6 is part of the receptor-TRAF signaling complex. May interact with CYLD; the C-terminus interacts with CYLD, however the interaction was not detected with the full-length protein. Interacts with POLK and POLN. Interacts with UIMC1. In terms of processing, autoubiquitinated. Post-translationally, sumoylated; sumoylation is required for nuclear localization. Sumoylation increases protein stability, possibly by preventing ubiquitination. Detected in testis and thymus, and at lower levels in spleen.

It is found in the nucleus. Its subcellular location is the nucleoplasm. It localises to the nucleolus. The protein resides in the chromosome. The protein localises to the cytoplasm. It is found in the perinuclear region. The enzyme catalyses S-ubiquitinyl-[E2 ubiquitin-conjugating enzyme]-L-cysteine + [acceptor protein]-L-lysine = [E2 ubiquitin-conjugating enzyme]-L-cysteine + N(6)-ubiquitinyl-[acceptor protein]-L-lysine.. It functions in the pathway protein modification; protein ubiquitination. Functionally, E3 ubiquitin ligase required to protect genome stability in response to replication stress. Acts as a key regulator of interstrand cross-link repair, which takes place when both strands of duplex DNA are covalently tethered together, thereby blocking replication and transcription. During mitosis, controls the choice between the two pathways of replication-coupled interstrand-cross-link repair by mediating ubiquitination of MCM7 subunit of the CMG helicase complex. Short ubiquitin chains on MCM7 promote recruitment of DNA glycosylase NEIL3. If the interstrand cross-link cannot be cleaved by NEIL3, the ubiquitin chains continue to grow on MCM7, promoting the unloading of the CMG helicase complex by the VCP/p97 ATPase, enabling the Fanconi anemia DNA repair pathway. Only catalyzes ubiquitination of MCM7 when forks converge. Also involved in the repair of covalent DNA-protein cross-links (DPCs) during DNA synthesis: promotes ubiquitination of DPCs, leading to their degradation by the proteasome. Has also been proposed to play a role in promoting translesion synthesis by mediating the assembly of 'Lys-63'-linked poly-ubiquitin chains on the Y-family polymerase POLN in order to facilitate bypass of DNA lesions and preserve genomic integrity. The function in translesion synthesis is however controversial. Acts as a regulator of the spindle assembly checkpoint. Also acts as a negative regulator of innate immune signaling by inhibiting activation of NF-kappa-B mediated by TNF. Negatively regulates TLR3/4- and RIG-I-mediated IRF3 activation and subsequent IFNB1 production and cellular antiviral response by promoting 'Lys-48'-linked polyubiquitination of TNK1 leading to its proteasomal degradation. The polypeptide is E3 ubiquitin-protein ligase TRAIP (Mus musculus (Mouse)).